A 1025-amino-acid chain; its full sequence is Glycine dehydrogenase (decarboxylating), mitochondrial (1025 aa).

A mitochondrion-targeting transit peptide spans 1–35 (MQLCARAWGLRLGRGAGGGHRLARGTGLSWAQRSR). The interval 16–51 (AGGGHRLARGTGLSWAQRSRDSSGGGGGGGGGDRGA) is disordered. Residues 38–50 (SGGGGGGGGGDRG) are compositionally biased toward gly residues. 4 positions are modified to N6-acetyllysine: Lys-452, Lys-519, Lys-653, and Lys-669. An N6-(pyridoxal phosphate)lysine modification is found at Lys-759.

It belongs to the GcvP family. Interacts with GCSH. Homodimer. The glycine cleavage system is composed of four proteins: P (GLDC), T (GCST), L (DLD) and H (GCSH). Requires pyridoxal 5'-phosphate as cofactor.

Its subcellular location is the mitochondrion. It carries out the reaction N(6)-[(R)-lipoyl]-L-lysyl-[glycine-cleavage complex H protein] + glycine + H(+) = N(6)-[(R)-S(8)-aminomethyldihydrolipoyl]-L-lysyl-[glycine-cleavage complex H protein] + CO2. With respect to regulation, stimulated by lipoic acid. Inhibited in presence of methylamine. Functionally, the glycine cleavage system catalyzes the degradation of glycine. The P protein (GLDC) binds the alpha-amino group of glycine through its pyridoxal phosphate cofactor; CO(2) is released and the remaining methylamine moiety is then transferred to the lipoamide cofactor of the H protein (GCSH). The chain is Glycine dehydrogenase (decarboxylating), mitochondrial from Mus musculus (Mouse).